Reading from the N-terminus, the 426-residue chain is Potassium channel subfamily K member 2 (426 aa).

Over 1–61 the chain is Cytoplasmic; that stretch reads MLASASRERP…SAINVMKWKT (61 aa). Important for GNG4 binding and L-glutamate release in astrocytes regions lie at residues 17-38 and 51-61; these read AAPD…LSFS and DSAINVMKWKT. A helical membrane pass occupies residues 62–82; sequence VSTIFLVVVLYLIIGATVFKA. Residues asparagine 110 and asparagine 134 are each glycosylated (N-linked (GlcNAc...) asparagine). The pore-forming intramembrane region spans 144-170; that stretch reads LGSSFFFAGTVITTIGFGNISPRTEGG. Threonine 157, isoleucine 158, glycine 159, and phenylalanine 160 together coordinate K(+). The interval 157-162 is selectivity filter 1; sequence TIGFGN. The chain crosses the membrane as a helical span at residues 172-192; it reads IFCIIYALLGIPLFGFLLAGV. Topologically, residues 193–222 are cytoplasmic; that stretch reads GDQLGTIFGKGIAKVEDTFIKWNVSQTKIR. The helical transmembrane segment at 223–243 threads the bilayer; sequence IISTIIFILFGCVLFVALPAV. The segment at residues 253–283 is an intramembrane region (pore-forming); that stretch reads ALDAIYFVVITLTTIGFGDYVAGGSDIEYLD. Residues threonine 266, isoleucine 267, glycine 268, and phenylalanine 269 each contribute to the K(+) site. The segment at 266–271 is selectivity filter 2; that stretch reads TIGFGD. The helical transmembrane segment at 288–308 threads the bilayer; it reads VVWFWILVGLAYFAAVLSMIG. Topologically, residues 309 to 426 are cytoplasmic; sequence DWLRVISKKT…EDIAVIENMK (118 aa). Residues 313–326 form an interaction with AKAP5 region; it reads VISKKTKEEVGEFR. Positions 337–385 are essential for chloroform and halothane sensitivity; that stretch reads TAEFKETRRRLSVEIYDKFQRATSVKRKLSAELAGNHNQELTPCRRTLS. At serine 348 the chain carries Phosphoserine; by PKA.

It belongs to the two pore domain potassium channel (TC 1.A.1.8) family. As to quaternary structure, homodimer; disulfide-linked. Forms heterodimers with other 2-pore domain K(+) channel subunits, such as KCNK1, KCNK4, KCNK10 and KCNK18. Interacts with AKAP5; the channel is recruited to postsynaptic microdomains by AKAP5 where it can integrate neurotransmitter receptor signals. Part of a complex composed of AKAP5 and ADRB2. Upon AKAP5 binding, the channel is no longer sensitive to intracellular acidification, membrane stretch or arachidonic acid stimuli. Interacts with POPDC1; the interaction enhances KCNK2 surface expression and is inhibited by cAMP. Interacts (via N-terminus) with G-protein subunit GNG4 (via C-terminus); this interaction confers ion selectivity to L-glutamate and Cl(-) anions. Post-translationally, phosphorylation at Ser-348 controls the reversible conversion from a leak channel to a voltage-dependent channel. As to expression, expressed in cardiomyocytes (at protein level). Expressed in various brain regions including the lateral olfactory tract, piriform cortex of the forebrain, paraventricular and anteromedial thalamic nuclei, brainstem, caudate putamen, nucleus accumbens, neocortex and interpeduncular nucleus. Detected in astrocytes in hippocampus stratum radiatum. Expressed in brain and kidney.

It is found in the cell membrane. Its subcellular location is the endoplasmic reticulum membrane. It localises to the cell projection. The protein resides in the axon. The protein localises to the dendrite. It is found in the postsynaptic density membrane. Its subcellular location is the sarcolemma. It catalyses the reaction K(+)(in) = K(+)(out). The catalysed reaction is L-glutamate(out) = L-glutamate(in). It carries out the reaction chloride(in) = chloride(out). The enzyme catalyses Rb(+)(in) = Rb(+)(out). It catalyses the reaction Cs(+)(in) = Cs(+)(out). Activated by various stimuli including intracellular acidic pH, mechanical stretch and polyunsaturated fatty acids such as arachidonic acid. Its function is as follows. K(+) channel that conducts voltage-dependent outward rectifying currents upon membrane depolarization. Voltage sensing is coupled to K(+) electrochemical gradient in an 'ion flux gating' mode where outward but not inward ion flow opens the gate. Converts to voltage-independent 'leak' conductance mode upon stimulation by various stimuli including mechanical membrane stretch, acidic pH, heat and lipids. Reversibly converts between a voltage-insensitive K(+) 'leak' channel and a voltage-dependent outward rectifying K(+) channel in a phosphorylation-dependent manner. Homo- and heterodimerizes to form functional channels with distinct regulatory and gating properties. In trigeminal ganglia sensory neurons, the heterodimer of KCNK2/TREK-1 and KCNK18/TRESK inhibits neuronal firing and neurogenic inflammation by stabilizing the resting membrane potential at K(+) equilibrium potential as well as by regulating the threshold of action potentials and the spike frequency. At trigeminal A-beta afferent nerves, the heterodimer of KCNK2/TREK-1 and KCNK4/TRAAK is mostly coexpressed at nodes of Ranvier where it conducts voltage-independent mechanosensitive and thermosensitive currents, allowing rapid action potential repolarization, high speed and high frequence saltatory conduction on myelinated nerves to ensure prompt sensory responses. In hippocampal astrocytes, the heterodimer of KCNK2/TREK-1 and KCNK1/TWIK-1 allows passive K(+) conductance under basal conditions, but changes ion selectivity and becomes permeable to L-glutamate and Cl(-) ions upon binding to G-protein subunit GNG4 in stimulated astrocytes. Mediates rapid L-glutamate release in response to activation of G-protein-coupled receptors such as F2R and CNR1. In hippocampal pyramidal neurons, the homodimer of KCNK2/TREK-1 contributes to gamma-aminobutyric acid (GABA) B-induced slow inhibitory postsynaptic potential. Associates with AKAP5 and Gs-protein-coupled receptor B2AR at postsynaptic dense bodies and converts to a leak channel no longer sensitive to stimulation by arachidonic acid, acidic pH or mechanical stress, nor inhibited by Gq-coupled receptors but still under the negative control of Gs-coupled receptors. Permeable to other monovalent cations such as Rb(+) and Cs(+). Does not display channel activity but reduces the channel activity of isoform 1, isoform 2 and isoform 4 and reduces cell surface expression of isoform 2. The protein is Potassium channel subfamily K member 2 of Rattus norvegicus (Rat).